Consider the following 215-residue polypeptide: Ribonuclease T (215 aa).

Positions 20 to 194 (VVIDVETAGF…YDTERTAVLF (175 aa)) constitute an Exonuclease domain. Positions 23, 25, 181, and 186 each coordinate Mg(2+). Catalysis depends on H181, which acts as the Proton donor/acceptor.

It belongs to the RNase T family. In terms of assembly, homodimer. Requires Mg(2+) as cofactor.

Trims short 3' overhangs of a variety of RNA species, leaving a one or two nucleotide 3' overhang. Responsible for the end-turnover of tRNA: specifically removes the terminal AMP residue from uncharged tRNA (tRNA-C-C-A). Also appears to be involved in tRNA biosynthesis. This chain is Ribonuclease T, found in Shigella boydii serotype 4 (strain Sb227).